Here is a 538-residue protein sequence, read N- to C-terminus: Phosphoenolpyruvate carboxykinase (ATP) (538 aa).

Substrate is bound by residues Arg-61, Tyr-195, and Lys-201. ATP is bound by residues Lys-201, His-220, and 236–244; that span reads GLSGTGKTT. The Mn(2+) site is built by Lys-201 and His-220. Asp-257 lines the Mn(2+) pocket. ATP-binding residues include Glu-285, Arg-323, and Thr-449. Arg-323 is a substrate binding site.

The protein belongs to the phosphoenolpyruvate carboxykinase (ATP) family. Requires Mn(2+) as cofactor.

The protein localises to the cytoplasm. It catalyses the reaction oxaloacetate + ATP = phosphoenolpyruvate + ADP + CO2. Its pathway is carbohydrate biosynthesis; gluconeogenesis. Involved in the gluconeogenesis. Catalyzes the conversion of oxaloacetate (OAA) to phosphoenolpyruvate (PEP) through direct phosphoryl transfer between the nucleoside triphosphate and OAA. The polypeptide is Phosphoenolpyruvate carboxykinase (ATP) (Nitrobacter winogradskyi (strain ATCC 25391 / DSM 10237 / CIP 104748 / NCIMB 11846 / Nb-255)).